We begin with the raw amino-acid sequence, 334 residues long: B1 bradykinin receptor (334 aa).

The tract at residues 1–21 is disordered; sequence MASQASLKLQPSNQSQQAPPN. Over 1-41 the chain is Extracellular; sequence MASQASLKLQPSNQSQQAPPNITSCEGAPEAWDLLCRVLPG. Positions 10–21 are enriched in low complexity; that stretch reads QPSNQSQQAPPN. N-linked (GlcNAc...) asparagine glycans are attached at residues N13 and N21. A helical membrane pass occupies residues 42 to 62; that stretch reads FVITVCFFGLLGNLLVLSFFL. The Cytoplasmic portion of the chain corresponds to 63-80; sequence LPWRRWWQQRRQRLTIAE. The helical transmembrane segment at 81–101 threads the bilayer; sequence IYLANLAASDLVFVLGLPFWA. The Extracellular segment spans residues 102-118; sequence ENVGNRFNWPFGSDLCR. An intrachain disulfide couples C117 to C196. The chain crosses the membrane as a helical span at residues 119-139; the sequence is VVSGVIKANLFISIFLVVAIS. Topologically, residues 140 to 161 are cytoplasmic; it reads QDRYRLLVYPMTSWGNRRRRQA. The chain crosses the membrane as a helical span at residues 162–182; sequence QVTCLLIWVAGGLLSTPTFLL. The Extracellular portion of the chain corresponds to 183–214; sequence RSVKVVPDLNISACILLFPHEAWHFVRMVELN. A glycan (N-linked (GlcNAc...) asparagine) is linked at N192. Residues 215–235 traverse the membrane as a helical segment; that stretch reads VLGFLLPLAAILYFNFHILAS. Residues 236–258 lie on the Cytoplasmic side of the membrane; that stretch reads LRGQKEASRTRCGGPKDSKTMGL. A helical transmembrane segment spans residues 259–279; sequence ILTLVASFLVCWAPYHFFAFL. Topologically, residues 280–302 are extracellular; that stretch reads DFLVQVRVIQDCFWKELTDLGLQ. Residues 303-323 form a helical membrane-spanning segment; the sequence is LANFFAFVNSCLNPLIYVFAG. Topologically, residues 324 to 334 are cytoplasmic; that stretch reads RLFKTRVLGTL.

This sequence belongs to the G-protein coupled receptor 1 family. Bradykinin receptor subfamily. BDKRB1 sub-subfamily. In terms of tissue distribution, expressed in heart, liver and lung.

It is found in the cell membrane. In terms of biological role, this is a receptor for bradykinin. Could be a factor in chronic pain and inflammation. In Mus musculus (Mouse), this protein is B1 bradykinin receptor (Bdkrb1).